Here is a 39-residue protein sequence, read N- to C-terminus: Cytochrome b559 subunit beta (39 aa).

The chain crosses the membrane as a helical span at residues 14-30 (WLAIHGLAVPTVFFLGS). His18 is a heme binding site.

It belongs to the PsbE/PsbF family. Heterodimer of an alpha subunit and a beta subunit. PSII is composed of 1 copy each of membrane proteins PsbA, PsbB, PsbC, PsbD, PsbE, PsbF, PsbH, PsbI, PsbJ, PsbK, PsbL, PsbM, PsbT, PsbX, PsbY, PsbZ, Psb30/Ycf12, at least 3 peripheral proteins of the oxygen-evolving complex and a large number of cofactors. It forms dimeric complexes. Heme b serves as cofactor.

It localises to the plastid. It is found in the chloroplast thylakoid membrane. This b-type cytochrome is tightly associated with the reaction center of photosystem II (PSII). PSII is a light-driven water:plastoquinone oxidoreductase that uses light energy to abstract electrons from H(2)O, generating O(2) and a proton gradient subsequently used for ATP formation. It consists of a core antenna complex that captures photons, and an electron transfer chain that converts photonic excitation into a charge separation. In Ephedra sinica (Chinese ephedra), this protein is Cytochrome b559 subunit beta.